Here is a 516-residue protein sequence, read N- to C-terminus: Endoglucanase 20 (516 aa).

A signal peptide spans 1-23 (MAAGMVATMVLLTCLAAGGLVVG). N-linked (GlcNAc...) asparagine glycosylation occurs at N83. D93 serves as the catalytic Nucleophile. Active-site residues include H416, D468, and E477.

This sequence belongs to the glycosyl hydrolase 9 (cellulase E) family.

It localises to the secreted. It catalyses the reaction Endohydrolysis of (1-&gt;4)-beta-D-glucosidic linkages in cellulose, lichenin and cereal beta-D-glucans.. The polypeptide is Endoglucanase 20 (GLU15) (Oryza sativa subsp. japonica (Rice)).